Here is a 316-residue protein sequence, read N- to C-terminus: Transaldolase (316 aa).

Lysine 127 serves as the catalytic Schiff-base intermediate with substrate.

The protein belongs to the transaldolase family. Type 2 subfamily.

The protein localises to the cytoplasm. The enzyme catalyses D-sedoheptulose 7-phosphate + D-glyceraldehyde 3-phosphate = D-erythrose 4-phosphate + beta-D-fructose 6-phosphate. It participates in carbohydrate degradation; pentose phosphate pathway; D-glyceraldehyde 3-phosphate and beta-D-fructose 6-phosphate from D-ribose 5-phosphate and D-xylulose 5-phosphate (non-oxidative stage): step 2/3. Its function is as follows. Transaldolase is important for the balance of metabolites in the pentose-phosphate pathway. The chain is Transaldolase from Helicobacter pylori (strain Shi470).